Here is a 487-residue protein sequence, read N- to C-terminus: Probable cobyric acid synthase (487 aa).

Residues 246-431 enclose the GATase cobBQ-type domain; the sequence is LVRIAVIRLP…LHGLFMVPAA (186 aa). C325 functions as the Nucleophile in the catalytic mechanism. Residue H423 is part of the active site.

The protein belongs to the CobB/CobQ family. CobQ subfamily.

It functions in the pathway cofactor biosynthesis; adenosylcobalamin biosynthesis. In terms of biological role, catalyzes amidations at positions B, D, E, and G on adenosylcobyrinic A,C-diamide. NH(2) groups are provided by glutamine, and one molecule of ATP is hydrogenolyzed for each amidation. This Methanosphaerula palustris (strain ATCC BAA-1556 / DSM 19958 / E1-9c) protein is Probable cobyric acid synthase.